The chain runs to 396 residues: MAAPSVSCGAAVPYRLFLAGRVSFAREQGLWKAAASGLQTGTRCQILRLKHSPAVTTTKNVAALRRESYTVDFIKKQIEEFNIGKRHLANMMGEDPETFTQEDVDRAITYLFPSGLFEKRARPIMKHPEEIFPKQRAVQWGEDGRPFHFLFYTGKQSYYSLMHEAYGKVLHAEERQDQLRAKGLFSEKSKSKDLIGSRWLIKEELEEMLVEKLSDQDYAQFIRLLERLSALPCDAAEEEFVGRFRRTVTVQSKKHLIEPLQYDEQGMAFSTGQGKRKTANAEAVVYGHGSGKIEINGVDYLLYFPVTQDREQLMFPFHFLDRLGKHDVTCTVSGGGRSSQAGAIRLAMSRALCSFITEDEVEWMRQAGLLTTDPRVRERKKPGQEGARRKFTWKKR.

The interval proline 374–arginine 396 is disordered.

This sequence belongs to the universal ribosomal protein uS9 family. As to quaternary structure, component of the mitochondrial ribosome small subunit (28S) which comprises a 12S rRNA and about 30 distinct proteins.

It is found in the mitochondrion. The protein is Small ribosomal subunit protein uS9m (MRPS9) of Bos taurus (Bovine).